We begin with the raw amino-acid sequence, 264 residues long: Thymidylate synthase (264 aa).

A dUMP-binding site is contributed by arginine 21. Histidine 51 contributes to the (6R)-5,10-methylene-5,6,7,8-tetrahydrofolate binding site. Residue 126-127 (RR) participates in dUMP binding. Cysteine 146 acts as the Nucleophile in catalysis. Residues 166–169 (RSCD), asparagine 177, and 207–209 (HLY) each bind dUMP. (6R)-5,10-methylene-5,6,7,8-tetrahydrofolate is bound at residue aspartate 169. A (6R)-5,10-methylene-5,6,7,8-tetrahydrofolate-binding site is contributed by alanine 263.

It belongs to the thymidylate synthase family. Bacterial-type ThyA subfamily. Homodimer.

It is found in the cytoplasm. It carries out the reaction dUMP + (6R)-5,10-methylene-5,6,7,8-tetrahydrofolate = 7,8-dihydrofolate + dTMP. It functions in the pathway pyrimidine metabolism; dTTP biosynthesis. Catalyzes the reductive methylation of 2'-deoxyuridine-5'-monophosphate (dUMP) to 2'-deoxythymidine-5'-monophosphate (dTMP) while utilizing 5,10-methylenetetrahydrofolate (mTHF) as the methyl donor and reductant in the reaction, yielding dihydrofolate (DHF) as a by-product. This enzymatic reaction provides an intracellular de novo source of dTMP, an essential precursor for DNA biosynthesis. The chain is Thymidylate synthase from Xenorhabdus nematophila (strain ATCC 19061 / DSM 3370 / CCUG 14189 / LMG 1036 / NCIMB 9965 / AN6).